We begin with the raw amino-acid sequence, 350 residues long: Succinylglutamate desuccinylase (350 aa).

Residues His71, Glu74, and His169 each contribute to the Zn(2+) site. Glu233 is a catalytic residue.

The protein belongs to the AspA/AstE family. Succinylglutamate desuccinylase subfamily. The cofactor is Zn(2+).

It carries out the reaction N-succinyl-L-glutamate + H2O = L-glutamate + succinate. It participates in amino-acid degradation; L-arginine degradation via AST pathway; L-glutamate and succinate from L-arginine: step 5/5. Transforms N(2)-succinylglutamate into succinate and glutamate. The polypeptide is Succinylglutamate desuccinylase (Pseudoalteromonas atlantica (strain T6c / ATCC BAA-1087)).